Reading from the N-terminus, the 285-residue chain is HTH-type transcriptional regulator MurR (285 aa).

The region spanning 1-77 (MLYLTKIRNA…MALIGEYSAS (77 aa)) is the HTH rpiR-type domain. The segment at residues 37–56 (SRQMAKQLGISQSSIVKFAQ) is a DNA-binding region (H-T-H motif). Positions 128–268 (IIEVISKAPF…FVGLVQLNDV (141 aa)) constitute an SIS domain.

Homotetramer.

It functions in the pathway amino-sugar metabolism; N-acetylmuramate degradation [regulation]. Functionally, represses the expression of the murPQ operon involved in the uptake and degradation of N-acetylmuramic acid (MurNAc). Binds to two adjacent inverted repeats within the operator region. MurNAc 6-phosphate, the substrate of MurQ, is the specific inducer that weakens binding of MurR to the operator. This Escherichia coli (strain ATCC 8739 / DSM 1576 / NBRC 3972 / NCIMB 8545 / WDCM 00012 / Crooks) protein is HTH-type transcriptional regulator MurR.